The sequence spans 228 residues: Large ribosomal subunit protein uL23m (228 aa).

Residues 194–228 form a disordered region; sequence PEEEGWSEVEENLPLDESAESAAEESSSKGSETRQ. Acidic residues predominate over residues 195–216; it reads EEEGWSEVEENLPLDESAESAA.

This sequence belongs to the universal ribosomal protein uL23 family. Component of the mitochondrial large ribosomal subunit (mt-LSU). Mature N.crassa 74S mitochondrial ribosomes consist of a small (37S) and a large (54S) subunit. The 37S small subunit contains a 16S ribosomal RNA (16S mt-rRNA) and 32 different proteins. The 54S large subunit contains a 23S rRNA (23S mt-rRNA) and 42 different proteins. uL23m forms the wall of the exit tunnel.

Its subcellular location is the mitochondrion. In terms of biological role, component of the mitochondrial ribosome (mitoribosome), a dedicated translation machinery responsible for the synthesis of mitochondrial genome-encoded proteins, including at least some of the essential transmembrane subunits of the mitochondrial respiratory chain. The mitoribosomes are attached to the mitochondrial inner membrane and translation products are cotranslationally integrated into the membrane. The protein is Large ribosomal subunit protein uL23m (mrp20) of Neurospora crassa (strain ATCC 24698 / 74-OR23-1A / CBS 708.71 / DSM 1257 / FGSC 987).